The following is a 62-amino-acid chain: DNA-directed RNA polymerase subunit Rpo10 (62 aa).

4 residues coordinate Zn(2+): C6, C9, C43, and C44.

Belongs to the archaeal Rpo10/eukaryotic RPB10 RNA polymerase subunit family. In terms of assembly, part of the RNA polymerase complex. Zn(2+) is required as a cofactor.

It is found in the cytoplasm. It carries out the reaction RNA(n) + a ribonucleoside 5'-triphosphate = RNA(n+1) + diphosphate. In terms of biological role, DNA-dependent RNA polymerase (RNAP) catalyzes the transcription of DNA into RNA using the four ribonucleoside triphosphates as substrates. The chain is DNA-directed RNA polymerase subunit Rpo10 from Methanosarcina barkeri (strain Fusaro / DSM 804).